A 106-amino-acid chain; its full sequence is Antitoxin MazE3 (106 aa).

Forms a complex with cognate toxin MazF3, possibly with 1:1 stoichiometry.

Functionally, antitoxin component of a type II toxin-antitoxin (TA) system. Upon expression in E.coli and M.smegmatis neutralizes the effect of cognate toxin MazF3. Overexpression of MazE3 alone decreased persister cells formation in M.smegmatis upon challenge with gentamicin or kanamycin. This Mycobacterium tuberculosis (strain ATCC 25618 / H37Rv) protein is Antitoxin MazE3 (mazE3).